A 209-amino-acid polypeptide reads, in one-letter code: CAAX box protein 1 (209 aa).

Positions 182–209 (TAGRPPRDLSPSARPISSPPPETSCVLA) are disordered. Cys-206 carries the cysteine methyl ester modification. Cys-206 carries the S-farnesyl cysteine lipid modification. Residues 207–209 (VLA) constitute a propeptide, removed in mature form.

Ubiquitous.

It localises to the cell membrane. In Homo sapiens (Human), this protein is CAAX box protein 1.